We begin with the raw amino-acid sequence, 237 residues long: Protein GrpE (237 aa).

Residues 1-65 (MTDSYKLPDN…DAREDDRDPT (65 aa)) are disordered. Over residues 55–65 (VDAREDDRDPT) the composition is skewed to basic and acidic residues.

The protein belongs to the GrpE family. As to quaternary structure, homodimer.

The protein resides in the cytoplasm. Participates actively in the response to hyperosmotic and heat shock by preventing the aggregation of stress-denatured proteins, in association with DnaK and GrpE. It is the nucleotide exchange factor for DnaK and may function as a thermosensor. Unfolded proteins bind initially to DnaJ; upon interaction with the DnaJ-bound protein, DnaK hydrolyzes its bound ATP, resulting in the formation of a stable complex. GrpE releases ADP from DnaK; ATP binding to DnaK triggers the release of the substrate protein, thus completing the reaction cycle. Several rounds of ATP-dependent interactions between DnaJ, DnaK and GrpE are required for fully efficient folding. The chain is Protein GrpE from Corynebacterium efficiens (strain DSM 44549 / YS-314 / AJ 12310 / JCM 11189 / NBRC 100395).